Reading from the N-terminus, the 522-residue chain is Transcription factor SPT20 homolog (522 aa).

Serine 284 carries the phosphoserine modification. 2 disordered regions span residues 361 to 380 (DEES…DHSN) and 408 to 522 (PVKM…RHES). Positions 412–425 (SHSSSGSASLSQVS) are enriched in low complexity. Residues 433-442 (TETVSVQSSV) show a composition bias toward polar residues. Positions 458-467 (SSSGNSSSGN) are enriched in low complexity. A compositionally biased stretch (pro residues) spans 481 to 492 (PTPPPSSKPPTI). Phosphothreonine is present on threonine 482. The span at 506–522 (LSPAALSPASSSQRHES) shows a compositional bias: low complexity. Phosphoserine is present on residues serine 507 and serine 512.

Belongs to the SPT20 family. Interacts with ATG9A. Interacts with MAPK14.

In terms of biological role, required for MAP kinase p38 (MAPK11, MAPK12, MAPK13 and/or MAPK14) activation during gastrulation. Required for down-regulation of E-cadherin during gastrulation by regulating E-cadherin protein level downstream from NCK-interacting kinase (NIK) and independently of the regulation of transcription by FGF signaling and Snail. Required for starvation-induced ATG9A trafficking during autophagy. The polypeptide is Transcription factor SPT20 homolog (SUPT20H) (Pongo abelii (Sumatran orangutan)).